Reading from the N-terminus, the 25-residue chain is Grammistin Pp 3 (25 aa).

This sequence belongs to the grammistin family. Group 3 subfamily. In terms of assembly, exists as aggregates of 3-4 molecules. As to expression, expressed by the skin glands.

Its subcellular location is the secreted. In terms of biological role, thanks to its abundant amphiphilic alpha-helices, it may integrate into membrane phospholipids, leading to lysis of the membrane. Has hemolytic activity. Has antibacterial activity with a broad spectrum against various species of bacteria including both Gram-positive and Gram-negative groups. Also has ichthyotoxic activity. The protein is Grammistin Pp 3 of Pogonoperca punctata (Clown grouper).